Consider the following 368-residue polypeptide: 1-aminocyclopropane-1-carboxylate synthase (368 aa).

Residue Lys230 is modified to N6-(pyridoxal phosphate)lysine.

It belongs to the class-I pyridoxal-phosphate-dependent aminotransferase family. Homodimer. The cofactor is pyridoxal 5'-phosphate.

The catalysed reaction is S-adenosyl-L-methionine = 1-aminocyclopropane-1-carboxylate + S-methyl-5'-thioadenosine + H(+). It functions in the pathway alkene biosynthesis; ethylene biosynthesis via S-adenosyl-L-methionine; ethylene from S-adenosyl-L-methionine: step 1/2. Catalyzes the formation of 1-aminocyclopropane-1-carboxylate, a direct precursor of ethylene in higher plants. The protein is 1-aminocyclopropane-1-carboxylate synthase (ACS5) of Vigna radiata var. radiata (Mung bean).